The primary structure comprises 146 residues: UPF0260 protein VF_1660 (146 aa).

Belongs to the UPF0260 family.

The polypeptide is UPF0260 protein VF_1660 (Aliivibrio fischeri (strain ATCC 700601 / ES114) (Vibrio fischeri)).